Here is a 103-residue protein sequence, read N- to C-terminus: MQQNIRIQKNQYDTATHPTASSTTWKYVTYDETSETFGMSEQVADPCNHCPKPRNYNSECKDEDVEKHFEKVMPCVHTYTIIYGNVHHLPNHPIIRNLRHNHY.

This is an uncharacterized protein from Caenorhabditis elegans.